The following is a 1350-amino-acid chain: Zinc finger protein Xfin (1350 aa).

Positions methionine 1 to glutamate 58 constitute a KRAB domain. A disordered region spans residues serine 47–aspartate 68. 37 consecutive C2H2-type zinc fingers follow at residues histidine 108–histidine 130, histidine 136–histidine 158, tyrosine 164–histidine 186, tyrosine 192–histidine 214, tyrosine 220–histidine 242, tyrosine 248–histidine 270, phenylalanine 276–histidine 298, tyrosine 326–histidine 348, tyrosine 354–histidine 376, tyrosine 382–histidine 404, phenylalanine 410–histidine 432, tyrosine 438–histidine 460, tyrosine 466–histidine 488, histidine 503–histidine 525, phenylalanine 531–histidine 553, phenylalanine 559–histidine 581, phenylalanine 587–histidine 609, histidine 615–histidine 637, tyrosine 643–histidine 665, tyrosine 671–histidine 693, tyrosine 699–histidine 721, tyrosine 750–histidine 772, tyrosine 778–histidine 800, tyrosine 806–histidine 828, tyrosine 834–histidine 856, tyrosine 862–histidine 884, tyrosine 890–histidine 912, tyrosine 918–histidine 940, phenylalanine 988–histidine 1010, tyrosine 1016–histidine 1038, tyrosine 1044–histidine 1066, tyrosine 1136–histidine 1158, tyrosine 1164–histidine 1186, tyrosine 1192–histidine 1214, tyrosine 1220–histidine 1242, tyrosine 1248–histidine 1270, and tyrosine 1276–cysteine 1298.

It belongs to the krueppel C2H2-type zinc-finger protein family. In terms of processing, phosphorylated. Phosphorylation enhances RNA binding. In terms of tissue distribution, expressed in oocytes, and in specialized cell types such as neural retina cones in adults.

The protein localises to the cytoplasm. Binds to poly-G sequences in RNA. May function in post-translational regulation processes. This Xenopus laevis (African clawed frog) protein is Zinc finger protein Xfin.